The chain runs to 274 residues: Protein YehF (274 aa).

In terms of domain architecture, WGR spans 2–78 (RHFIYQDEKS…KDNSLQPSQT (77 aa)).

In terms of biological role, has been implicated in selenate reduction; a mini-Tn10 insertion mutant in 'molR', (which was mapped to 47.3 centisomes i.e. this locus), is defective in the reduction of selenate. The sequence is that of Protein YehF (yehF) from Escherichia coli (strain K12).